The primary structure comprises 190 residues: Pyridoxal 5'-phosphate synthase subunit PdxT (190 aa).

46–48 contacts L-glutamine; it reads GES. Catalysis depends on C78, which acts as the Nucleophile. Residues R105 and 138-139 contribute to the L-glutamine site; that span reads IR. Catalysis depends on charge relay system residues H174 and E176.

Belongs to the glutaminase PdxT/SNO family. In the presence of PdxS, forms a dodecamer of heterodimers. Only shows activity in the heterodimer.

The catalysed reaction is aldehydo-D-ribose 5-phosphate + D-glyceraldehyde 3-phosphate + L-glutamine = pyridoxal 5'-phosphate + L-glutamate + phosphate + 3 H2O + H(+). The enzyme catalyses L-glutamine + H2O = L-glutamate + NH4(+). The protein operates within cofactor biosynthesis; pyridoxal 5'-phosphate biosynthesis. Its function is as follows. Catalyzes the hydrolysis of glutamine to glutamate and ammonia as part of the biosynthesis of pyridoxal 5'-phosphate. The resulting ammonia molecule is channeled to the active site of PdxS. In Bifidobacterium longum (strain NCC 2705), this protein is Pyridoxal 5'-phosphate synthase subunit PdxT.